We begin with the raw amino-acid sequence, 214 residues long: N-(5'-phosphoribosyl)anthranilate isomerase (214 aa).

The protein belongs to the TrpF family.

The catalysed reaction is N-(5-phospho-beta-D-ribosyl)anthranilate = 1-(2-carboxyphenylamino)-1-deoxy-D-ribulose 5-phosphate. Its pathway is amino-acid biosynthesis; L-tryptophan biosynthesis; L-tryptophan from chorismate: step 3/5. In Rhodospirillum centenum (strain ATCC 51521 / SW), this protein is N-(5'-phosphoribosyl)anthranilate isomerase.